A 2684-amino-acid polypeptide reads, in one-letter code: Teneurin-1 (2684 aa).

Disordered stretches follow at residues 1–37, 127–156, and 170–204; these read MFQHRTTNAQGPPPNRPMPRPPAGMPMMTSSHEHDYT, TTSSTLSPASGQRYLDQPHTSGGAPNPTYS, and GTNQNRRRQQVGTMNNGDPVAGGPMALSKKKKKFD. At 1–216 the chain is on the cytoplasmic side; sequence MFQHRTTNAQ…SDTCSRWPSK (216 aa). The segment covering 11 to 24 has biased composition (pro residues); that stretch reads GPPPNRPMPRPPAG. Residues 127–136 are compositionally biased toward low complexity; sequence TTSSTLSPAS. Residues 217-237 form a helical membrane-spanning segment; it reads WNILLAAALLVALFVICILLF. Topologically, residues 238–2684 are extracellular; it reads RAPNYVYTQP…VHSWKFRKSE (2447 aa). 2 consecutive EGF-like domains span residues 463–499 and 501–534; these read TGRTCDEAVCPVVCSGNGVFSGGICVCKSGFKGKECE and RHNWCEVADCNGRGRCDTDGRCRCNPGWTGEACE. Disulfide bonds link cysteine 467–cysteine 476, cysteine 472–cysteine 487, cysteine 489–cysteine 498, cysteine 505–cysteine 516, cysteine 510–cysteine 522, and cysteine 524–cysteine 533. The interval 576-614 is disordered; sequence PQAQSPPRRGQEPTESSKTRKAQVKPTPTSEKKKESREL. Basic and acidic residues-rich tracts occupy residues 584 to 593 and 605 to 614; these read RGQEPTESSK and SEKKKESREL. EGF-like domains follow at residues 650–684 and 716–753; these read DSVDCSQQACQCVNGDCLDDGSCQCWKGWRGSNCT and AIDGCPNQCSGKGECGMDRRSSEWSCRCQAGSTGVDCS. 6 disulfide bridges follow: cysteine 654–cysteine 666, cysteine 659–cysteine 672, cysteine 674–cysteine 683, cysteine 720–cysteine 730, cysteine 724–cysteine 741, and cysteine 743–cysteine 752. NHL repeat units lie at residues 1276-1317, 1334-1378, 1398-1441, and 1470-1513; these read DSCG…IDTT, RTCA…VVHD, SASA…VRKL, and AVSL…VSAR.

The protein belongs to the tenascin family. Teneurin subfamily. Post-translationally, probably proteolytically processed to generate a N-terminal intracellular domain. Isoform 1 is mainly expressed in organs derived from the mesoderm, including the pharynx, vulva muscles, gonad distal tip cells, intestine and several tail neurons. Isoform 2 is mainly expressed in the organs derived from the ectoderm, including hypodermal cells, head ganglion neurons and tail neurons (at protein level).

The protein localises to the nucleus. The protein resides in the cell membrane. Its subcellular location is the membrane. In terms of biological role, plays a role in the gonadal basement membrane maintenance and/or adhesion early in development. Contributes to the guidance of pharyngeal neurons. This Caenorhabditis elegans protein is Teneurin-1 (ten-1).